Consider the following 141-residue polypeptide: Putative pre-16S rRNA nuclease (141 aa).

It belongs to the YqgF nuclease family.

It is found in the cytoplasm. Could be a nuclease involved in processing of the 5'-end of pre-16S rRNA. This Acetivibrio thermocellus (strain ATCC 27405 / DSM 1237 / JCM 9322 / NBRC 103400 / NCIMB 10682 / NRRL B-4536 / VPI 7372) (Clostridium thermocellum) protein is Putative pre-16S rRNA nuclease.